Here is a 316-residue protein sequence, read N- to C-terminus: Epoxide hydrolase 2 (316 aa).

Positions 25–302 (PAVLFLHGFP…AAHFINQERP (278 aa)) constitute an AB hydrolase-1 domain. The active-site Nucleophile is the Asp-101. Tyr-150 contacts an epoxide. The active-site Proton donor is Tyr-230. His-295 acts as the Proton acceptor in catalysis.

It belongs to the AB hydrolase superfamily. Epoxide hydrolase family. As to quaternary structure, homodimer. Highly expressed in young fruits 15 days after anthesis (15-DAA). Also observed in stems and leaves.

It carries out the reaction an epoxide + H2O = an ethanediol. The catalysed reaction is (24S)-24,25-epoxycucurbitadienol + H2O = (24R)-24,25-dihydroxycucurbitadienol. Its pathway is secondary metabolite biosynthesis; terpenoid biosynthesis. Epoxide hydrolase involved in the biosynthesis of cucurbitacin and mogroside tetracyclic triterpene natural products (e.g. siamenoside I and mogrosides IV, V and VI). Cucurbitacins have cytotoxic properties and exhibit deterrent taste as a defense barrier against herbivores. Mogrosides are nonsugar highly oxygenated compounds used as high-intensity zero-calorie sweeteners; they also possess pharmacological properties such as regulating immunity, lowering blood sugar and lipid levels, protecting the liver, and acting as antioxidants and antitumor agents. Catalyzes the hydrolysis of aromatic epoxide-containing substrates, such as the conversion of 24,25-epoxycucurbitadienol to 24,25-dihydroxycucurbitadienol. The chain is Epoxide hydrolase 2 from Siraitia grosvenorii (Monk's fruit).